The primary structure comprises 499 residues: Leukocyte immunoglobulin-like receptor subfamily A member 4 (499 aa).

Positions 1–23 (MTLILTSLLFFGLSLGPRTRVQA) are cleaved as a signal peptide. 4 Ig-like C2-type domains span residues 24–118 (ENLL…LVVT), 123–213 (PTLS…SDPL), 224–313 (PSLL…DPLD), and 324–413 (PSLS…SEPL). At 24 to 446 (ENLLKPILWA…PHLQDYTVEN (423 aa)) the chain is on the extracellular side. C49 and C98 are joined by a disulfide. N138 is a glycosylation site (N-linked (GlcNAc...) asparagine). Cysteines 143 and 195 form a disulfide. N239, N279, and N300 each carry an N-linked (GlcNAc...) asparagine glycan. C244 and C295 are oxidised to a cystine. A disulfide bridge links C344 with C395. Position 404 is a 3'-nitrotyrosine (Y404). Residues 447 to 467 (LIRMGVAGLVLLFLGILLFEA) traverse the membrane as a helical segment. Topologically, residues 468–499 (QHSQRSPPRCSQEANSRKDNAPFRVVEPWEQI) are cytoplasmic.

Interacts with FCER1G; this stabilizes the expression of both proteins at the cell membrane. Interacts with BST2; leads to activation of LILRA4-mediated signaling and down-regulation of the innate immune response to viral pathogens. In terms of tissue distribution, detected on plasmacytoid dendritic cells (at protein level). Detected on plasmacytoid dendritic cells, but not on monocytes or B cells.

Its subcellular location is the cell membrane. Its function is as follows. Functions coreceptor to limit the innate immune responses to viral infections; signaling occurs via FCER1G. Down-regulates the production of IFNA1, IFNA2, IFNA4, IFNB1 and TNF by plasmacytoid dendritic cells that have been exposed to influenza virus or cytidine-phosphate-guanosine (CpG) dinucleotides, indicating it functions as a negative regulator of TLR7 and TLR9 signaling cascades. Down-regulates interferon production in response to interaction with BST2 on HIV-1 infected cells. Activates a signaling cascade in complex with FCER1G that results in phosphorylation of Src family and Syk kinases and thereby triggers mobilization of intracellular Ca(2+). Does not interfere with the differentiation of plasmacytoid dendritic cells into antigen-presenting cells. This is Leukocyte immunoglobulin-like receptor subfamily A member 4 from Homo sapiens (Human).